We begin with the raw amino-acid sequence, 209 residues long: Large ribosomal subunit protein uL3 (209 aa).

Positions 117-142 (FQGPIKRHGQSRGPETHGSRYHRRPG) are disordered.

This sequence belongs to the universal ribosomal protein uL3 family. Part of the 50S ribosomal subunit. Forms a cluster with proteins L14 and L19.

Functionally, one of the primary rRNA binding proteins, it binds directly near the 3'-end of the 23S rRNA, where it nucleates assembly of the 50S subunit. This chain is Large ribosomal subunit protein uL3, found in Clostridioides difficile (strain 630) (Peptoclostridium difficile).